The primary structure comprises 567 residues: Hexose transporter HXT15 (567 aa).

The span at 1–19 (MASEQSSPEINADNLNSSA) shows a compositional bias: polar residues. The disordered stretch occupies residues 1-32 (MASEQSSPEINADNLNSSAADVHVQPPGEKEW). Topologically, residues 1 to 55 (MASEQSSPEINADNLNSSAADVHVQPPGEKEWSDGFYDKEVINGNTPDAPKRGFL) are cytoplasmic. The chain crosses the membrane as a helical span at residues 56–76 (GYLIIYLLCYPVSFGGFLPGW). Topologically, residues 77–112 (DSGITAGFINMDNFKMNFGSYKHSTGEYYLSNVRMG) are extracellular. Residues 113–133 (LLVAMFSVGCSIGGVAFARLA) traverse the membrane as a helical segment. Over 134-139 (DTLGRR) the chain is Cytoplasmic. Residues 140–160 (LAIVIVVLVYMVGAIIQISSN) form a helical membrane-spanning segment. Residues 161–170 (HKWYQYFVGK) lie on the Extracellular side of the membrane. The chain crosses the membrane as a helical span at residues 171 to 191 (IIYGLGAGGCSVLCPMLLSEI). Over 192 to 197 (APTDLR) the chain is Cytoplasmic. A helical membrane pass occupies residues 198-218 (GGLVSLYQLNMTFGIFLGYCS). Residues 219–232 (VYGTRKYSNTAQWR) are Extracellular-facing. A helical transmembrane segment spans residues 233 to 253 (IPVGLCFLWALIIIVGMLLVP). The Cytoplasmic segment spans residues 254–336 (ESPRYLIECE…VQTFLQLTGE (83 aa)). A helical transmembrane segment spans residues 337–353 (NYFFFYGTTIFKSVGLT). Topologically, residues 354–359 (DGFETS) are extracellular. The chain crosses the membrane as a helical span at residues 360–377 (IVLGTVNFFSTIIAVMVV). Residues 378–384 (DKIGRRK) lie on the Cytoplasmic side of the membrane. A helical transmembrane segment spans residues 385-405 (CLLFGAASMMACMVIFASIGV). Topologically, residues 406–427 (KCLYPHGQDGPSSKGAGNAMIV) are extracellular. A helical membrane pass occupies residues 428-448 (FTCFYIFCFATTWAPVAYIVV). Topologically, residues 449 to 465 (AESFPSKVKSKAMSIST) are cytoplasmic. The helical transmembrane segment at 466-486 (AFNWLWQFLIGFFTPFITGSI) threads the bilayer. Residue His487 is a topological domain, extracellular. Residues 488–508 (FYYGYVFVGCLVAMFLYVFFF) form a helical membrane-spanning segment. Topologically, residues 509–567 (LPETIGLSLEEIQLLYEEGIKPWKSASWVPPSRRGASSRETEAKKKSWKEVLKFPKSFN) are cytoplasmic. The interval 533–555 (SASWVPPSRRGASSRETEAKKKS) is disordered. Residues 545 to 555 (SSRETEAKKKS) show a composition bias toward basic and acidic residues.

This sequence belongs to the major facilitator superfamily. Sugar transporter (TC 2.A.1.1) family.

The protein resides in the membrane. Functionally, probable glucose transporter. The sequence is that of Hexose transporter HXT15 (HXT15) from Saccharomyces cerevisiae (strain ATCC 204508 / S288c) (Baker's yeast).